We begin with the raw amino-acid sequence, 559 residues long: DnaJ homolog subfamily C member 11 (559 aa).

The residue at position 2 (Ala2) is an N-acetylalanine. Residues 14–82 (DYYSLLNVRR…QTRAIYDIYG (69 aa)) form the J domain. Ser204 is modified (phosphoserine). Residues 417 to 457 (EKELEKQRESAATDVLQKKQEAESAVRLMQESVRRIIEAEE) adopt a coiled-coil conformation.

Belongs to the DNAJC11 family. As to quaternary structure, associates with the mitochondrial contact site and cristae organizing system (MICOS) complex, composed of at least MICOS10/MIC10, CHCHD3/MIC19, CHCHD6/MIC25, APOOL/MIC27, IMMT/MIC60, APOO/MIC23/MIC26 and QIL1/MIC13. This complex was also known under the names MINOS or MitOS complex. The MICOS complex associates with mitochondrial outer membrane proteins SAMM50, MTX1 and MTX2 (together described as components of the mitochondrial outer membrane sorting assembly machinery (SAM) complex) and DNAJC11, mitochondrial inner membrane protein TMEM11 and with HSPA9. The MICOS and SAM complexes together with DNAJC11 are part of a large protein complex spanning both membranes termed the mitochondrial intermembrane space bridging (MIB) complex.

The protein resides in the mitochondrion. It is found in the mitochondrion outer membrane. Its function is as follows. Required for mitochondrial inner membrane organization. Seems to function through its association with the MICOS complex and the mitochondrial outer membrane sorting assembly machinery (SAM) complex. This Pongo abelii (Sumatran orangutan) protein is DnaJ homolog subfamily C member 11 (DNAJC11).